The chain runs to 335 residues: Cut9-interacting protein scn1 (335 aa).

Belongs to the metallo-dependent hydrolases superfamily.

Functionally, interacts with cut9. In Schizosaccharomyces pombe (strain 972 / ATCC 24843) (Fission yeast), this protein is Cut9-interacting protein scn1 (scn1).